Here is a 227-residue protein sequence, read N- to C-terminus: RNA pyrophosphohydrolase (227 aa).

A Nudix hydrolase domain is found at 6 to 149 (GFRPNVGIIL…KRDVYQMALT (144 aa)). Positions 38 to 59 (GGIKYGETPEQAMYRELHEEIG) match the Nudix box motif. The disordered stretch occupies residues 165 to 227 (PYGTHGAHGA…PVSTTRSTDD (63 aa)). The span at 192–201 (AQAAQQADAD) shows a compositional bias: low complexity. Over residues 217–227 (TPVSTTRSTDD) the composition is skewed to polar residues.

The protein belongs to the Nudix hydrolase family. RppH subfamily. A divalent metal cation serves as cofactor.

Accelerates the degradation of transcripts by removing pyrophosphate from the 5'-end of triphosphorylated RNA, leading to a more labile monophosphorylated state that can stimulate subsequent ribonuclease cleavage. The polypeptide is RNA pyrophosphohydrolase (Cupriavidus taiwanensis (strain DSM 17343 / BCRC 17206 / CCUG 44338 / CIP 107171 / LMG 19424 / R1) (Ralstonia taiwanensis (strain LMG 19424))).